The primary structure comprises 106 residues: Thiosulfate sulfurtransferase GlpE (106 aa).

Residues 16–104 (REQGAVLVDV…WRATYPDETV (89 aa)) enclose the Rhodanese domain. Cys-64 serves as the catalytic Cysteine persulfide intermediate.

This sequence belongs to the GlpE family.

The protein localises to the cytoplasm. It catalyses the reaction thiosulfate + hydrogen cyanide = thiocyanate + sulfite + 2 H(+). The catalysed reaction is thiosulfate + [thioredoxin]-dithiol = [thioredoxin]-disulfide + hydrogen sulfide + sulfite + 2 H(+). Its function is as follows. Transferase that catalyzes the transfer of sulfur from thiosulfate to thiophilic acceptors such as cyanide or dithiols. May function in a CysM-independent thiosulfate assimilation pathway by catalyzing the conversion of thiosulfate to sulfite, which can then be used for L-cysteine biosynthesis. The sequence is that of Thiosulfate sulfurtransferase GlpE from Pseudomonas savastanoi pv. phaseolicola (strain 1448A / Race 6) (Pseudomonas syringae pv. phaseolicola (strain 1448A / Race 6)).